We begin with the raw amino-acid sequence, 134 residues long: uncharacterized protein (134 aa).

The N-terminal stretch at 1–37 (MSYIKRDHTALRDIAMKTFLKVVGLAASLSAASVAFS) is a signal peptide.

This is an uncharacterized protein from Coxiella burnetii (strain RSA 493 / Nine Mile phase I).